We begin with the raw amino-acid sequence, 277 residues long: Orotidine 5'-phosphate decarboxylase (277 aa).

Residues aspartate 40, 62 to 64 (KTH), 93 to 102 (DRKFIDIGNT), tyrosine 229, and arginine 247 contribute to the substrate site. Lysine 95 acts as the Proton donor in catalysis.

Belongs to the OMP decarboxylase family.

It catalyses the reaction orotidine 5'-phosphate + H(+) = UMP + CO2. It functions in the pathway pyrimidine metabolism; UMP biosynthesis via de novo pathway; UMP from orotate: step 2/2. The polypeptide is Orotidine 5'-phosphate decarboxylase (pyrG) (Aspergillus kawachii (White koji mold)).